The following is a 143-amino-acid chain: Large ribosomal subunit protein uL11 (143 aa).

The protein belongs to the universal ribosomal protein uL11 family. As to quaternary structure, part of the ribosomal stalk of the 50S ribosomal subunit. Interacts with L10 and the large rRNA to form the base of the stalk. L10 forms an elongated spine to which L12 dimers bind in a sequential fashion forming a multimeric L10(L12)X complex. One or more lysine residues are methylated.

Its function is as follows. Forms part of the ribosomal stalk which helps the ribosome interact with GTP-bound translation factors. The protein is Large ribosomal subunit protein uL11 of Polynucleobacter necessarius subsp. necessarius (strain STIR1).